Reading from the N-terminus, the 366-residue chain is Glycine betaine monooxygenase reductase subunit (366 aa).

Positions 16 to 119 (NGRHLVRCVK…HGPVGLFNAI (104 aa)) constitute an FAD-binding FR-type domain. A 2Fe-2S ferredoxin-type domain is found at 282-366 (HQVEFTATGK…VPKGDVVIDY (85 aa)). Residues C316, C321, C324, and C354 each contribute to the [2Fe-2S] cluster site.

It in the N-terminal section; belongs to the FAD-binding oxidoreductase type 6 family. In terms of assembly, the system is composed of an oxygenase subunit (GbcA) and a reductase subunit (GbcB). FAD is required as a cofactor. It depends on [2Fe-2S] cluster as a cofactor.

It carries out the reaction glycine betaine + NADH + O2 + H(+) = N,N-dimethylglycine + formaldehyde + NAD(+) + H2O. In terms of biological role, involved in degradation of glycine betaine. Part of a Rieske-type oxygenase system that catalyzes the conversion of glycine betaine (GB) to dimethylglycine (DMG). This subunit is the ferredoxin reductase component of the system. Required for growth on choline and GB, but not for growth on DMG. This is Glycine betaine monooxygenase reductase subunit from Pseudomonas aeruginosa (strain ATCC 15692 / DSM 22644 / CIP 104116 / JCM 14847 / LMG 12228 / 1C / PRS 101 / PAO1).